The primary structure comprises 457 residues: MTTIKLHNSKTRKKEVFTPIDPDNVQMYVCGPTVYDRAHLGNARPVVVFDVLFRLLRHVYGDKKVTYARNFTDVDDKINTRAAESGRAIGEITSETIQWFLEDMGALGALQPTHMPRATEYIPQMIAMIEELIARDHAYEAEGHVLFAVDSWREGYGQLSGRSVDDMIAGARVEVAPYKKNPMDFVLWKPSDADQPGWESPWGRGRPGWHIECSAMSHDLLGESFDIHCGGNDLMFPHHENEIAQSCCANPEGEFARYWLHNEMLQVEGKKMSKSLGNFFTVRDLLDQGIPGEVVRFVFLQTHYRKPMDWTEKKAAEAEATLRKWRALTAGIEPAATAAAAVVDALSDDLNTAGAIAEMHKLAAAGDGAGLLAAGQLVGLLGDEMGEWAAAPSVDLSAHEARLFKARQAAMETKDFSEVDRLKAAYTEAGLEVRMSKTGVELVPGAGFDAAKLEALS.

Cys-30 contacts Zn(2+). A 'HIGH' region motif is present at residues 32–42; it reads PTVYDRAHLGN. The Zn(2+) site is built by Cys-213, His-238, and Glu-242. A 'KMSKS' region motif is present at residues 271–275; that stretch reads KMSKS. Lys-274 is an ATP binding site.

This sequence belongs to the class-I aminoacyl-tRNA synthetase family. Monomer. Zn(2+) is required as a cofactor.

The protein localises to the cytoplasm. It catalyses the reaction tRNA(Cys) + L-cysteine + ATP = L-cysteinyl-tRNA(Cys) + AMP + diphosphate. The sequence is that of Cysteine--tRNA ligase from Ruegeria sp. (strain TM1040) (Silicibacter sp.).